A 970-amino-acid polypeptide reads, in one-letter code: Rho GTPase-activating protein gacK (970 aa).

The first 20 residues, 1–20, serve as a signal peptide directing secretion; that stretch reads MTLVYEKSSFVLIMAQIAEA. Disordered regions lie at residues 30 to 49, 258 to 285, 312 to 446, 487 to 550, and 860 to 886; these read SNDLLSTSAGSPPSPTSAAI, STCSLSSNASNNYPQSPPKYNNFEINQN, EITI…FSPT, STSN…NNNN, and TASSAATANSSSSGSGNGNSSPNNDDP. 2 stretches are compositionally biased toward low complexity: residues 35 to 49 and 258 to 269; these read STSAGSPPSPTSAAI and STCSLSSNASNN. A compositionally biased stretch (pro residues) spans 321–333; that stretch reads IPLPPQSSSPPPT. The segment covering 334–383 has biased composition (low complexity); that stretch reads RNNQSSPSPSSPQQQNIMPTPPSTSLTPPQSPTLSPSSSTHSTPTQTTTT. A compositionally biased stretch (polar residues) spans 392–406; it reads PSTISQNNARKTQIP. The segment covering 407–426 has biased composition (low complexity); the sequence is TTTTTTTTTTTTTSTTSTTS. A compositionally biased stretch (polar residues) spans 427–446; the sequence is PNPVVNNKNLNTPSSSFSPT. The Rho-GAP domain occupies 754–970; sequence IEDSELVEDN…LELIQFNKSL (217 aa). The span at 860-885 shows a compositional bias: low complexity; that stretch reads TASSAATANSSSSGSGNGNSSPNNDD.

The protein resides in the cytoplasm. In terms of biological role, rho GTPase-activating protein involved in the signal transduction pathway. The chain is Rho GTPase-activating protein gacK (gacK) from Dictyostelium discoideum (Social amoeba).